The primary structure comprises 331 residues: MSLFDPHLDGASLGKVAVLMGGVSAEREVSLLSGAGVLRALRARAVDAHAFDTAQGDLGALKREGYARCFIALHGRHGEDGTVQGALELLGIAYTGSGVMASSMALDKTMSKRIWRSEGLPTPDWRLVTSGAEAGQALQTLGAPMIVKPAREGSTIGLSKVHQAQQCASAYLLAARYDPEVLCEQFIAGDELTCTVLDQGRRASAQALPLIRIVAPDGNYDYQHKYFSDATRYHCPSGLPEAQERAIGRLAEQAFSALGCRGWARADIMLRASDQQPFLLEINTAPGMTDHSLVPMSARAAGISYEDLCLRLLAMATLDTPPGALSGAARA.

The 203-residue stretch at 112–314 folds into the ATP-grasp domain; it reads KRIWRSEGLP…YEDLCLRLLA (203 aa). 138 to 193 is an ATP binding site; it reads LQTLGAPMIVKPAREGSTIGLSKVHQAQQCASAYLLAARYDPEVLCEQFIAGDELT. D267, E281, and N283 together coordinate Mg(2+).

This sequence belongs to the D-alanine--D-alanine ligase family. The cofactor is Mg(2+). It depends on Mn(2+) as a cofactor.

It localises to the cytoplasm. It catalyses the reaction 2 D-alanine + ATP = D-alanyl-D-alanine + ADP + phosphate + H(+). The protein operates within cell wall biogenesis; peptidoglycan biosynthesis. Cell wall formation. This chain is D-alanine--D-alanine ligase, found in Verminephrobacter eiseniae (strain EF01-2).